Consider the following 172-residue polypeptide: MSKDTAIFAGGCFWCMVEPFDKMPGIISVRSGYTGGFVENPTYEQVCSHTTGHTEAVKIVFDPEIISYAELVNIYWRQTDPTDAMGQFQDRGDSYRPVIFVHDEEQRKIAEESKKALAESGEFDKPIVTQIEDAKPFYEAEEYHQDFYKKNPERYALEEMGGREQFRNQHWN.

Cys12 is a catalytic residue.

The protein belongs to the MsrA Met sulfoxide reductase family.

It catalyses the reaction L-methionyl-[protein] + [thioredoxin]-disulfide + H2O = L-methionyl-(S)-S-oxide-[protein] + [thioredoxin]-dithiol. The enzyme catalyses [thioredoxin]-disulfide + L-methionine + H2O = L-methionine (S)-S-oxide + [thioredoxin]-dithiol. Its function is as follows. Has an important function as a repair enzyme for proteins that have been inactivated by oxidation. Catalyzes the reversible oxidation-reduction of methionine sulfoxide in proteins to methionine. In Ligilactobacillus salivarius (strain UCC118) (Lactobacillus salivarius), this protein is Peptide methionine sulfoxide reductase MsrA.